The following is a 278-amino-acid chain: Inositol-pentakisphosphate 2-kinase (278 aa).

The short motif at 124–128 (EIKPK) is the EXKPK motif element.

The protein belongs to the IPK1 type 1 family.

The protein localises to the nucleus. It catalyses the reaction 1D-myo-inositol 1,3,4,5,6-pentakisphosphate + ATP = 1D-myo-inositol hexakisphosphate + ADP + H(+). In terms of biological role, has kinase activity and phosphorylates inositol-1,3,4,5,6-pentakisphosphate (Ins(1,3,4,5,6)P5) to produce 1,2,3,4,5,6-hexakisphosphate (InsP6), also known as phytate. This chain is Inositol-pentakisphosphate 2-kinase (IPK1), found in Candida glabrata (strain ATCC 2001 / BCRC 20586 / JCM 3761 / NBRC 0622 / NRRL Y-65 / CBS 138) (Yeast).